Here is a 117-residue protein sequence, read N- to C-terminus: V-type proton ATPase subunit G (117 aa).

The protein belongs to the V-ATPase G subunit family. V-ATPase is a heteromultimeric enzyme made up of two complexes: the ATP-hydrolytic V1 complex and the proton translocation V0 complex. The V1 complex consists of three catalytic AB heterodimers that form a heterohexamer, three peripheral stalks each consisting of EG heterodimers, one central rotor including subunits D and F, and the regulatory subunits C and H. The proton translocation complex V0 consists of the proton transport subunit a, a ring of proteolipid subunits c9c'', rotary subunit d, subunits e and f, and the accessory subunits VhaAC45 and ATP6AP2.

Functionally, subunit of the V1 complex of vacuolar(H+)-ATPase (V-ATPase), a multisubunit enzyme composed of a peripheral complex (V1) that hydrolyzes ATP and a membrane integral complex (V0) that translocates protons. V-ATPase is responsible for acidifying and maintaining the pH of intracellular compartments and in some cell types, is targeted to the plasma membrane, where it is responsible for acidifying the extracellular environment. In enterocytes, acts as part of a pHCl-2 sensory pathway which mediates Tor-dependent larval growth and metabolism in response to zinc availability. Likely acts in maintaining enterocyte lysosomal acidification which consequently promotes Tor activation at the lysosome membrane. This is V-type proton ATPase subunit G (Vha13) from Drosophila melanogaster (Fruit fly).